A 372-amino-acid polypeptide reads, in one-letter code: Chaperone protein DnaJ (372 aa).

Positions 5 to 69 (DYYEVLGVSK…DKRKQYDQFG (65 aa)) constitute a J domain. The CR-type zinc finger occupies 139–221 (GVDKIIELDL…CKGKGKYLER (83 aa)). The Zn(2+) site is built by Cys-152, Cys-155, Cys-169, Cys-172, Cys-195, Cys-198, Cys-209, and Cys-212. 4 CXXCXGXG motif repeats span residues 152–159 (CSACFGSG), 169–176 (CNNCHGTG), 195–202 (CNVCNGAG), and 209–216 (CKNCKGKG).

It belongs to the DnaJ family. Homodimer. Requires Zn(2+) as cofactor.

The protein resides in the cytoplasm. Its function is as follows. Participates actively in the response to hyperosmotic and heat shock by preventing the aggregation of stress-denatured proteins and by disaggregating proteins, also in an autonomous, DnaK-independent fashion. Unfolded proteins bind initially to DnaJ; upon interaction with the DnaJ-bound protein, DnaK hydrolyzes its bound ATP, resulting in the formation of a stable complex. GrpE releases ADP from DnaK; ATP binding to DnaK triggers the release of the substrate protein, thus completing the reaction cycle. Several rounds of ATP-dependent interactions between DnaJ, DnaK and GrpE are required for fully efficient folding. Also involved, together with DnaK and GrpE, in the DNA replication of plasmids through activation of initiation proteins. The protein is Chaperone protein DnaJ of Mycoplasma capricolum subsp. capricolum (strain California kid / ATCC 27343 / NCTC 10154).